Reading from the N-terminus, the 262-residue chain is Small ribosomal subunit protein uS3 (262 aa).

In terms of domain architecture, KH type-2 spans 39-107; sequence VREFLKKKLK…PVHVNIEEIR (69 aa). The interval 211–262 is disordered; that stretch reads NDAPVVEEPQEERRKRPGRPEGRRREGEGRPAGQRRGAGAGARRGTDAKTGE. Residues 221–239 are compositionally biased toward basic and acidic residues; sequence EERRKRPGRPEGRRREGEG.

It belongs to the universal ribosomal protein uS3 family. Part of the 30S ribosomal subunit. Forms a tight complex with proteins S10 and S14.

Its function is as follows. Binds the lower part of the 30S subunit head. Binds mRNA in the 70S ribosome, positioning it for translation. This chain is Small ribosomal subunit protein uS3, found in Ralstonia pickettii (strain 12J).